The following is a 495-amino-acid chain: Iroquois-class homeodomain protein irx-4-B (495 aa).

Residues 141 to 203 (GSTRRKNATR…NARRRLKKEN (63 aa)) constitute a DNA-binding region (homeobox; TALE-type). Residues 203–245 (NKMTWPPRNKCSDEKRPYDEEEEEEEDSQKATIKNEKKTVDEE) are disordered. The span at 235-245 (IKNEKKTVDEE) shows a compositional bias: basic and acidic residues.

Belongs to the TALE/IRO homeobox family.

The protein localises to the nucleus. Acts partially redundantly with other irx members in neural patterning. Required for formation of the posterior forebrain, midbrain, hindbrain, and to a lesser extent, spinal cord. Patterns the neuroectoderm in both the anterior/posterior and dorsal/ventral axes. Does not appear to play a role in pronephros kidney development. The chain is Iroquois-class homeodomain protein irx-4-B (irx4-b) from Xenopus laevis (African clawed frog).